Reading from the N-terminus, the 164-residue chain is MPSLAPDCPLLAMPEETQEDSVAPMMPSQRSRGPLAPNHVHEVCLHQVESISDLHSGAGTLRPYLTEEARPWDELLGVLPPSLCAQAGCSPVYRRGGFLLLLALLVLTCLVLALLAVYLSVLQSESLRILAHTLRTQEETLLKLRLASLSQLRRLNSSEAQAPS.

Residues 97 to 117 (GFLLLLALLVLTCLVLALLAV) traverse the membrane as a helical segment.

It is found in the membrane. The chain is Leucine-rich single-pass membrane protein 2 (LSMEM2) from Homo sapiens (Human).